The following is a 138-amino-acid chain: Glutathione S-transferase Mu 5 (138 aa).

A Phosphoserine modification is found at S1. The region spanning 1–71 (SMVLGYWDIR…KITQSNAILR (71 aa)) is the GST N-terminal domain. Glutathione-binding positions include 6–7 (YW), 39–43 (WLDVK), 52–53 (NL), and 65–66 (QS). In terms of domain architecture, GST C-terminal spans 72–135 (IRVDIMENQI…FMCRCFKMPI (64 aa)).

It belongs to the GST superfamily. Mu family. Homodimer.

The protein resides in the cytoplasm. The catalysed reaction is RX + glutathione = an S-substituted glutathione + a halide anion + H(+). Functionally, conjugation of reduced glutathione to a wide number of exogenous and endogenous hydrophobic electrophiles. This is Glutathione S-transferase Mu 5 from Mesocricetus auratus (Golden hamster).